A 551-amino-acid chain; its full sequence is Chaperonin GroEL (551 aa).

ATP is bound by residues 29 to 32 (TMGP), Lys-50, 86 to 90 (DGTTT), Gly-414, 478 to 480 (NAA), and Asp-494.

Belongs to the chaperonin (HSP60) family. Forms a cylinder of 14 subunits composed of two heptameric rings stacked back-to-back. Interacts with the co-chaperonin GroES.

The protein resides in the cytoplasm. It carries out the reaction ATP + H2O + a folded polypeptide = ADP + phosphate + an unfolded polypeptide.. In terms of biological role, together with its co-chaperonin GroES, plays an essential role in assisting protein folding. The GroEL-GroES system forms a nano-cage that allows encapsulation of the non-native substrate proteins and provides a physical environment optimized to promote and accelerate protein folding. The chain is Chaperonin GroEL from Legionella jeonii.